Reading from the N-terminus, the 718-residue chain is MSASDLTSVQAAAPQGSRQILVTSALPYANGQIHIGHLVEYIQTDIWVRALRMHGHEVYYIGADDTHGTPIMLRAEKEGLTPKQLIDRVWTEHKRDFDSFGVSFDNFYSTDSDENRVLSEKIYLALQEAGLIAEREIEQAYDPVKEMFLPDRFIKGECPKCHAKDQYGDNCEVCGSTYLPTELLNPYSVVSGATPVRKTSKHYFFRLSDPRCESFLREWVSGLAQPEATNKMREWLGDAGEAKLADWDISRDAPYFGFEIPGAPGKYFYVWLDAPVGYYASFKNLCERNGIDFDAWIRPGSKAEQYHFIGKDILYFHTLFWPAMLEFSGHRTPTNVFAHGFLTVDGAKMSKSRGTFITAQSYIDTGLNPEWLRYYFAAKLNATMEDIDLNLDDFQARVNSDLVGKYVNIASRAAGFLIKRFDGRVQDSAMNHPLVAKLRDAIPQIAASYEAREYGRALRHTMELADEVNAYVDGAKPWDLAKDPANAVALHETCSVSLEAFRLLSLALKPVMPRVAAAVEAFFGIAPLAWADAAKPLSSAQPIKAYQHLMTRVDAKQIEALLAANRDSLQADAAGAAAGGANAAKDAKSNAKANAKPAVVNGADDAPISIDDFAKIDLRIAKIVACQAVEGSDKLLQLTLDVGEEKTRNVFSGIKSAYQPEQLVGKLTVMVANLAPRKMKFGLSEGMVLAASATDEKAEPGLYILEPHSGAKPGMRVK.

The short motif at 27–37 (PYANGQIHIGH) is the 'HIGH' region element. Residues Cys-158, Cys-161, Cys-171, and Cys-174 each coordinate Zn(2+). The 'KMSKS' region motif lies at 348-352 (KMSKS). An ATP-binding site is contributed by Lys-351. In terms of domain architecture, tRNA-binding spans 612–718 (DFAKIDLRIA…SGAKPGMRVK (107 aa)).

It belongs to the class-I aminoacyl-tRNA synthetase family. MetG type 1 subfamily. As to quaternary structure, homodimer. The cofactor is Zn(2+).

It is found in the cytoplasm. The catalysed reaction is tRNA(Met) + L-methionine + ATP = L-methionyl-tRNA(Met) + AMP + diphosphate. In terms of biological role, is required not only for elongation of protein synthesis but also for the initiation of all mRNA translation through initiator tRNA(fMet) aminoacylation. This is Methionine--tRNA ligase from Burkholderia cenocepacia (strain ATCC BAA-245 / DSM 16553 / LMG 16656 / NCTC 13227 / J2315 / CF5610) (Burkholderia cepacia (strain J2315)).